The chain runs to 398 residues: Thyrotropin-releasing hormone receptor (398 aa).

The Extracellular segment spans residues 1 to 28 (MENETGSELNQTQLQPRAVVALEYQVVT). 2 N-linked (GlcNAc...) asparagine glycosylation sites follow: Asn3 and Asn10. The chain crosses the membrane as a helical span at residues 29–51 (ILLVLIICGLGIVGNIMVVLVVM). Topologically, residues 52 to 61 (RTKHMRTPTN) are cytoplasmic. The chain crosses the membrane as a helical span at residues 62-83 (CYLVSLAVADLMVLVAAGLPNI). Residues 84-99 (TDSIYGSWVYGYVGCL) lie on the Extracellular side of the membrane. A disulfide bridge links Cys98 with Cys179. The chain crosses the membrane as a helical span at residues 100-121 (CITYLQYLGINASSCSITAFTI). The Cytoplasmic segment spans residues 122–144 (ERYIAICHPIKAQFLCTFSRAKK). The helical transmembrane segment at 145–168 (IIIFVWAFTSIYCMLWFFLLDLNI) threads the bilayer. Residues 169–193 (STYKDAIVVSCGYKISRNYYSPIYL) lie on the Extracellular side of the membrane. A helical transmembrane segment spans residues 194–215 (MDFGVFYVVPMILATVLYGFIA). Over 216-266 (RILFLNPIPSDPKENSNMWKNDSTHQNKNLNSKTSNRYFNSTVSSRKQVTK) the chain is Cytoplasmic. A helical membrane pass occupies residues 267–288 (MLAVVVILFALLWMPYRTLVVV). Residues 289 to 296 (NSFLSSPF) are Extracellular-facing. The chain crosses the membrane as a helical span at residues 297 to 319 (QENWFLLFCRICIYLNSAINPVI). Over 320 to 398 (YNLMSQKFRA…LASEITFNQS (79 aa)) the chain is Cytoplasmic.

The protein belongs to the G-protein coupled receptor 1 family.

It localises to the cell membrane. In terms of biological role, receptor for thyrotropin-releasing hormone (TRH). Upon ligand binding, this G-protein-coupled receptor triggers activation of the phosphatidylinositol (IP3)-calcium-protein kinase C (PKC) pathway. This Bos taurus (Bovine) protein is Thyrotropin-releasing hormone receptor (TRHR).